The primary structure comprises 452 residues: Tissue alpha-L-fucosidase (452 aa).

Positions 1–17 (MLLLLLLLLVAAAQAVA) are cleaved as a signal peptide. Residues asparagine 227, asparagine 254, asparagine 368, and asparagine 378 are each glycosylated (N-linked (GlcNAc...) asparagine).

The protein belongs to the glycosyl hydrolase 29 family. Homotetramer.

The protein localises to the lysosome. It carries out the reaction an alpha-L-fucoside + H2O = L-fucose + an alcohol. The catalysed reaction is a neolactoside IV(2)-alpha-Fuc-nLc4Cer(d18:1(4E)) + H2O = a neolactoside nLc4Cer(d18:1(4E)) + L-fucose. It catalyses the reaction a neolactoside IV(2)-alpha-Fuc-nLc4Cer(d18:0) + H2O = a neolactoside nLc4Cer(d18:0) + L-fucose. Functionally, alpha-L-fucosidase is responsible for hydrolyzing the alpha-1,6-linked fucose joined to the reducing-end N-acetylglucosamine of the carbohydrate moieties of glycoproteins. In Mus musculus (Mouse), this protein is Tissue alpha-L-fucosidase (Fuca1).